Consider the following 168-residue polypeptide: Photosystem I assembly protein Ycf3 (168 aa).

3 TPR repeats span residues 35–68 (AFTY…EIDP), 72–105 (SYIL…NPFL), and 120–153 (GEQA…TPGN).

The protein belongs to the Ycf3 family. In terms of assembly, interacts with Y3IP1.

The protein resides in the plastid. It is found in the chloroplast thylakoid membrane. Its function is as follows. Essential for the assembly of the photosystem I (PSI) complex. May act as a chaperone-like factor to guide the assembly of the PSI subunits. The polypeptide is Photosystem I assembly protein Ycf3 (Arabidopsis thaliana (Mouse-ear cress)).